A 153-amino-acid chain; its full sequence is Satratoxin biosynthesis SC2 cluster transcription factor SAT15 (153 aa).

It localises to the nucleus. In terms of biological role, transcriptional regulator that may regulate the expression of the satratoxin biosynthesis SC2 cluster, one of the 3 clusters involved in the biosynthesis of satratoxins, trichothecene mycotoxins that are associated with human food poisonings. The chain is Satratoxin biosynthesis SC2 cluster transcription factor SAT15 from Stachybotrys chartarum (strain CBS 109288 / IBT 7711) (Toxic black mold).